Here is a 169-residue protein sequence, read N- to C-terminus: Regulator of G-protein signaling rgs-2 (169 aa).

The RGS domain occupies 39–158 (GWSQSFENLM…FLASNIYKTV (120 aa)).

May be phosphorylated and activated by egl-4. As to expression, expressed in a subset of neurons including ventral cord and head- and tail-ganglia neurons. Also expressed in non-neuronal cells including pharyngeal and uterine muscles.

Weakly inhibits G protein signaling in nervous system, interacting preferentially with the G(O) subfamily member goa-1. In vitro, it acts as a GTPase activator of goa-1. Rgs-1 and rgs-2 redundantly adjust signaling when worms are fed to allow rapid induction of egg-laying behavior. Modulates chemotaxis responses by regulating negatively the sensitivity to quinine in ASH sensory neurons. This chain is Regulator of G-protein signaling rgs-2 (rgs-2), found in Caenorhabditis elegans.